Here is a 349-residue protein sequence, read N- to C-terminus: Phenylalanine--tRNA ligase alpha subunit (349 aa).

Position 258 (Glu-258) interacts with Mg(2+).

It belongs to the class-II aminoacyl-tRNA synthetase family. Phe-tRNA synthetase alpha subunit type 1 subfamily. As to quaternary structure, tetramer of two alpha and two beta subunits. It depends on Mg(2+) as a cofactor.

Its subcellular location is the cytoplasm. It carries out the reaction tRNA(Phe) + L-phenylalanine + ATP = L-phenylalanyl-tRNA(Phe) + AMP + diphosphate + H(+). This is Phenylalanine--tRNA ligase alpha subunit from Rickettsia africae (strain ESF-5).